A 79-amino-acid chain; its full sequence is UPF0180 protein BCE_1513 (79 aa).

The protein belongs to the UPF0180 family.

The polypeptide is UPF0180 protein BCE_1513 (Bacillus cereus (strain ATCC 10987 / NRS 248)).